The primary structure comprises 541 residues: Eukaryotic translation initiation factor 3 subunit L (541 aa).

The 209-residue stretch at 308 to 516 (TFSDILLYIQ…IHIADTKVSH (209 aa)) folds into the PCI domain.

It belongs to the eIF-3 subunit L family. As to quaternary structure, component of the eukaryotic translation initiation factor 3 (eIF-3) complex. The eIF-3 complex interacts with pix.

It is found in the cytoplasm. In terms of biological role, component of the eukaryotic translation initiation factor 3 (eIF-3) complex, which is involved in protein synthesis of a specialized repertoire of mRNAs and, together with other initiation factors, stimulates binding of mRNA and methionyl-tRNAi to the 40S ribosome. The eIF-3 complex specifically targets and initiates translation of a subset of mRNAs involved in cell proliferation. In Drosophila persimilis (Fruit fly), this protein is Eukaryotic translation initiation factor 3 subunit L.